Here is a 211-residue protein sequence, read N- to C-terminus: uncharacterized protein (211 aa).

Residues Ile-105–Arg-143 are a coiled coil. A helical membrane pass occupies residues Gln-191–Phe-211.

The protein belongs to the CCDC90 family.

It localises to the mitochondrion. The protein localises to the membrane. This is an uncharacterized protein from Schizosaccharomyces pombe (strain 972 / ATCC 24843) (Fission yeast).